A 232-amino-acid polypeptide reads, in one-letter code: Phosphatidylserine decarboxylase proenzyme (232 aa).

Catalysis depends on Ser190, which acts as the Schiff-base intermediate with substrate; via pyruvic acid. Residue Ser190 is modified to Pyruvic acid (Ser); by autocatalysis.

Belongs to the phosphatidylserine decarboxylase family. PSD-A subfamily. In terms of assembly, heterodimer of a large membrane-associated beta subunit and a small pyruvoyl-containing alpha subunit. It depends on pyruvate as a cofactor. Is synthesized initially as an inactive proenzyme. Formation of the active enzyme involves a self-maturation process in which the active site pyruvoyl group is generated from an internal serine residue via an autocatalytic post-translational modification. Two non-identical subunits are generated from the proenzyme in this reaction, and the pyruvate is formed at the N-terminus of the alpha chain, which is derived from the carboxyl end of the proenzyme. The post-translation cleavage follows an unusual pathway, termed non-hydrolytic serinolysis, in which the side chain hydroxyl group of the serine supplies its oxygen atom to form the C-terminus of the beta chain, while the remainder of the serine residue undergoes an oxidative deamination to produce ammonia and the pyruvoyl prosthetic group on the alpha chain.

Its subcellular location is the cell membrane. It carries out the reaction a 1,2-diacyl-sn-glycero-3-phospho-L-serine + H(+) = a 1,2-diacyl-sn-glycero-3-phosphoethanolamine + CO2. Its pathway is phospholipid metabolism; phosphatidylethanolamine biosynthesis; phosphatidylethanolamine from CDP-diacylglycerol: step 2/2. In terms of biological role, catalyzes the formation of phosphatidylethanolamine (PtdEtn) from phosphatidylserine (PtdSer). This Bradyrhizobium sp. (strain ORS 278) protein is Phosphatidylserine decarboxylase proenzyme.